The chain runs to 283 residues: Thymidylate synthase (283 aa).

Residue Arg22 coordinates dUMP. Cys160 acts as the Nucleophile in catalysis. DUMP contacts are provided by residues 180–183 (RSAD), Asn191, and 221–223 (HIY). Residue Asp183 participates in (6R)-5,10-methylene-5,6,7,8-tetrahydrofolate binding. Ser282 is a binding site for (6R)-5,10-methylene-5,6,7,8-tetrahydrofolate.

It belongs to the thymidylate synthase family. Bacterial-type ThyA subfamily. In terms of assembly, homodimer.

The protein resides in the cytoplasm. The catalysed reaction is dUMP + (6R)-5,10-methylene-5,6,7,8-tetrahydrofolate = 7,8-dihydrofolate + dTMP. It functions in the pathway pyrimidine metabolism; dTTP biosynthesis. Its function is as follows. Catalyzes the reductive methylation of 2'-deoxyuridine-5'-monophosphate (dUMP) to 2'-deoxythymidine-5'-monophosphate (dTMP) while utilizing 5,10-methylenetetrahydrofolate (mTHF) as the methyl donor and reductant in the reaction, yielding dihydrofolate (DHF) as a by-product. This enzymatic reaction provides an intracellular de novo source of dTMP, an essential precursor for DNA biosynthesis. The chain is Thymidylate synthase from Glaesserella parasuis serovar 5 (strain SH0165) (Haemophilus parasuis).